Consider the following 83-residue polypeptide: Putative membrane protein insertion efficiency factor (83 aa).

The protein belongs to the UPF0161 family.

The protein resides in the cell membrane. Could be involved in insertion of integral membrane proteins into the membrane. The polypeptide is Putative membrane protein insertion efficiency factor (Streptococcus thermophilus (strain ATCC BAA-250 / LMG 18311)).